The following is a 501-amino-acid chain: ADP,ATP carrier protein 3 (501 aa).

A run of 12 helical transmembrane segments spans residues 23–43 (LKLF…FGAL), 59–79 (IISF…TVLY), 90–110 (YIFY…AYII), 146–166 (YALM…LMFW), 183–203 (PVLG…LVFF), 227–247 (IMLQ…MLLF), 293–313 (IALL…PWKA), 326–346 (VNFM…FMII), 361–381 (LLTP…IIFI), 387–407 (CFGD…QNIL), 446–466 (FGKS…PTAT), and 470–490 (IIIY…WNVI).

It belongs to the ADP/ATP translocase tlc family.

The protein localises to the cell membrane. In terms of biological role, provides the rickettsial cell with host ATP in exchange for rickettsial ADP. This is an obligate exchange system. This energy acquiring activity is an important component of rickettsial parasitism. This Rickettsia conorii (strain ATCC VR-613 / Malish 7) protein is ADP,ATP carrier protein 3 (tlcC).